Consider the following 569-residue polypeptide: Protein GPR108 (569 aa).

The signal sequence occupies residues 1 to 34; it reads MAVSERRGLSGESPTQCRWGYLSLLVLTLSGCSG. N-linked (GlcNAc...) asparagine glycosylation is found at Asn-59, Asn-111, and Asn-182. Residues 144 to 219 are disordered; it reads LLPEAPTQSG…DPSGKEKDQV (76 aa). Residues 180 to 192 show a composition bias toward polar residues; that stretch reads KENQTAPQVSGDK. A compositionally biased stretch (basic and acidic residues) spans 194–203; it reads TPGEHRHSSE. Residues Asn-226 and Asn-230 are each glycosylated (N-linked (GlcNAc...) asparagine). Transmembrane regions (helical) follow at residues 289-309, 318-338, 362-382, 393-413, 427-447, 475-495, and 499-519; these read LYLI…SVLC, IHWL…FHSI, LLKG…WAFV, IFGI…VIES, ILFL…VWSI, VMVI…QVAV, and WQWL…VLTG.

It belongs to the LU7TM family. In terms of tissue distribution, high expression in spleen, lung, stomach, large and small intestine, and thymus.

The protein resides in the golgi apparatus. Its subcellular location is the cis-Golgi network membrane. It is found in the trans-Golgi network membrane. The protein localises to the golgi apparatus membrane. In terms of biological role, may play a role in intracellular immune modulation by activating NF-kappaB response and attenuating Toll-like-receptor response. Functionally, (Microbial infection) Plays an essential function in adeno-associated virus (AAV) transduction, across multiple serotypes except AAV5. May play a critical role in mediating the endosomal virus escape or in the AAV virions trafficking from endosomes to the nucleus. This is Protein GPR108 (Gpr108) from Mus musculus (Mouse).